The following is a 218-amino-acid chain: MARITNMGKRKRFLEATPYESKVLEQPKNSSNTNEESSSQDNMKASFGSSKRYDERQKKKRSEYRRLRRINQRNRDKFCFACRQQGHIVQDCPEAKDNVSICFRCGSKEHSLNACSKKGPLKFAKCFICHENGHLSGQCEQNPKGLYPKGGCCKFCSSVHHLAKDCDQVNKDDVSFGHVVGVAGTTGADEDVYHEYAKTVAAPTKKRPVKPVKKLVTF.

The interval 1–67 (MARITNMGKR…KKKRSEYRRL (67 aa)) is disordered. Residues 29 to 39 (NSSNTNEESSS) show a composition bias toward low complexity. Residues 40 to 49 (QDNMKASFGS) show a composition bias toward polar residues. The span at 58 to 67 (KKKRSEYRRL) shows a compositional bias: basic residues. 3 CCHC-type zinc fingers span residues 77–94 (KFCFACRQQGHIVQDCPE), 100–117 (SICFRCGSKEHSLNACSK), and 124–141 (AKCFICHENGHLSGQCEQ). The CCHC-type 4; atypical zinc-finger motif lies at 152–168 (CCKFCSSVHHLAKDCDQ).

This is an uncharacterized protein from Schizosaccharomyces pombe (strain 972 / ATCC 24843) (Fission yeast).